Reading from the N-terminus, the 579-residue chain is Pentatricopeptide repeat-containing protein At2g15690, mitochondrial (579 aa).

A mitochondrion-targeting transit peptide spans 1–49 (MSSLMAIRCARTQNIVTIGSLLQLRSSFPRLSSQFHFSGTLNSIPIKHL). 2 stretches are compositionally biased toward polar residues: residues 56 to 71 (NDYHQNPQSGSPSQHQ) and 78 to 103 (SFDSQNQTNTNQRVPQSPNQWSTQHG). The interval 56–208 (NDYHQNPQSG…QMNEVAPPPS (153 aa)) is disordered. 2 stretches are compositionally biased toward low complexity: residues 117-136 (GGQRPPYGGQNPQQGGQMSQ) and 148-199 (RPQY…SPNQ). PPR repeat units lie at residues 235-269 (DRECFVLLFESCANLKSLEHSKKVHDHFLQSKFRG), 270-300 (DPKLNNMVISMFGECSSITDAKRVFDHMVDK), 301-335 (DMDSWHLMMCAYSDNGMGDDALHLFEEMTKHGLKP), 336-371 (NEETFLTVFLACATVGGIEEAFLHFDSMKNEHGISP), and 372-402 (KTEHYLGVLGVLGKCGHLVEAEQYIRDLPFE). A type DYW motif region spans residues 485–579 (GVVYVPDTRF…DGKCSCGDYW (95 aa)).

It belongs to the PPR family. PCMP-H subfamily.

It localises to the mitochondrion. This Arabidopsis thaliana (Mouse-ear cress) protein is Pentatricopeptide repeat-containing protein At2g15690, mitochondrial (PCMP-H66).